The sequence spans 349 residues: Glycerol-3-phosphate dehydrogenase [NAD(+)], cytoplasmic (349 aa).

NAD(+) contacts are provided by residues 10–15 (GSGDWG), K120, and A153. Residue K120 participates in substrate binding. S154 bears the Phosphoserine mark. The active-site Proton acceptor is the K204. An NAD(+)-binding site is contributed by R269. 269–270 (RN) is a substrate binding site. N6-succinyllysine is present on K289. NAD(+) contacts are provided by K296 and Q298. Y326 carries the phosphotyrosine modification.

Belongs to the NAD-dependent glycerol-3-phosphate dehydrogenase family. Homodimer.

It is found in the cytoplasm. The catalysed reaction is sn-glycerol 3-phosphate + NAD(+) = dihydroxyacetone phosphate + NADH + H(+). Has glycerol-3-phosphate dehydrogenase activity. The sequence is that of Glycerol-3-phosphate dehydrogenase [NAD(+)], cytoplasmic (GPD1) from Oryctolagus cuniculus (Rabbit).